The primary structure comprises 305 residues: MSTQYSILFKQEHAHEDAIWSVGWGKNSNDGSELVISGSLDDLVKVWKWSDERLELQSTLEGHQLGVVSVDVSPSGNIMASSSLDAHIRLWDLESGKQIRAIDAGPVDAWSVAFSPDSQHLATGSHVGKVNIFGVETGKKEYSLDTRGKFILSIAYSPDGKYLASGAIDGIINIFDIATGKLLHTLEGHAMPIRSLTFSPDSQLLVTASDDGYIKIYEVQHASLAATLSGHGSWVLNVAFSPDDTHFVSSSSDKSVKVWDVSARTCVHTFLDHQDQVWGVKYNKNGSKIVSVADDQEIHVYDCPI.

WD repeat units lie at residues alanine 14–glutamine 57, glycine 62–alanine 101, alanine 104–serine 143, threonine 146–glutamate 187, glycine 188–threonine 227, glycine 230–threonine 269, and aspartate 272–isoleucine 305.

Belongs to the SKI8 family. As to quaternary structure, component of the PAF1 complex. Component of the SKI complex.

Its subcellular location is the nucleus. It localises to the cytoplasm. In terms of biological role, component of the PAF1 complex (PAF1C) which has multiple functions during transcription by RNA polymerase II and is implicated in regulation of development and maintenance of embryonic stem cell pluripotency. PAF1C associates with RNA polymerase II through interaction with POLR2A CTD non-phosphorylated and 'Ser-2'- and 'Ser-5'-phosphorylated forms and is involved in transcriptional elongation, acting both independently and synergistically with TCEA1 and in cooperation with the DSIF complex and HTATSF1. Also acts as a component of the SKI complex, a multiprotein complex that assists the RNA-degrading exosome during the mRNA decay and quality-control pathways. The SKI complex catalyzes mRNA extraction from 80S ribosomal complexes in the 3'-5' direction and channels mRNA to the cytosolic exosome for degradation. The polypeptide is Superkiller complex protein 8 (skic8) (Xenopus tropicalis (Western clawed frog)).